A 498-amino-acid chain; its full sequence is Polyphosphate:AMP phosphotransferase (498 aa).

2 PPK2 regions span residues isoleucine 11 to alanine 234 and leucine 269 to alanine 491.

Belongs to the polyphosphate kinase 2 (PPK2) family. Class II subfamily.

It carries out the reaction [phosphate](n) + ADP = [phosphate](n+1) + AMP. Functionally, uses inorganic polyphosphate (polyP) as a donor to convert AMP to ADP. Can also convert GMP to GDP, with lower efficiency. This is Polyphosphate:AMP phosphotransferase from Pseudomonas syringae pv. tomato (strain ATCC BAA-871 / DC3000).